Consider the following 4473-residue polypeptide: Plectin (4473 aa).

Calponin-homology (CH) domains lie at 1-74 (DGHN…LHFQ) and 87-192 (MTAK…DAMP). An actin-binding region spans residues 1 to 192 (DGHNLISLLE…YVSSLYDAMP (192 aa)). The globular 1 stretch occupies residues 1–1259 (DGHNLISLLE…SELTTLTSQY (1259 aa)). The Spectrin 1 repeat unit spans residues 449–508 (RYLQDLLAWVEENQRRIDSAEWGVDLPSVEAQLGSHRGMHQSIEEFRAKIERARNDESQL). A Phosphoserine modification is found at S509. Spectrin repeat units lie at residues 529–613 (KLLN…REDH) and 626–719 (LQTQ…AIVQ). T604 bears the Phosphothreonine mark. Positions 730 to 787 (RGHVPLMAVCDYKQVEVTVHKGDQCQLVGPAQPSHWKVLRGPSSEAAVPSVCFLVPPP) constitute an SH3 domain. S836 is modified (phosphoserine). A Spectrin 4 repeat occupies 1104-1204 (RERVNQLLER…QKFAKQYINA (101 aa)). S1224 carries the phosphoserine modification. The stretch at 1258–2548 (QYIKFISETL…EEIAATQAAA (1291 aa)) forms a coiled coil. The interval 1260–2544 (IKFISETLRR…LAHSEEIAAT (1285 aa)) is central fibrous rod domain. 2 disordered regions span residues 1274 to 1293 (ERLA…EGEA) and 1407 to 1434 (RAEE…DESQ). Position 1510 is a phosphoserine (S1510). K1514 is modified (N6-acetyllysine). 5 disordered regions span residues 1529–1550 (VTQL…ERAR), 1582–1616 (SLAQ…RELA), 1881–1929 (AEDT…AARQ), 1950–1971 (LRER…AAQK), and 2003–2098 (ERLR…KHKK). Composition is skewed to basic and acidic residues over residues 1587-1616 (DAEK…RELA), 1881-1897 (AEDT…EAAR), and 1905-1917 (EEQR…ERVQ). Positions 1959–1968 (ARQLQLAQEA) are enriched in low complexity. The segment covering 2003–2047 (ERLRGEAEAARRAAEEAEEAREQAEREAAQSRKQVEEAERLKQSA) has biased composition (basic and acidic residues). A compositionally biased stretch (low complexity) spans 2048–2061 (EEQAQARAQAQAAA). Residues 2062–2077 (EKLRKEAEQEAARRAQ) show a composition bias toward basic and acidic residues. A Phosphoserine modification is found at S2420. An N6-acetyllysine modification is found at K2425. A disordered region spans residues 2457–2476 (REEQQRQQRQMEQEKQELVA). The tract at residues 2545–4473 (QAAAAKALPN…SLGGPESAVA (1929 aa)) is globular 2. Phosphoserine occurs at positions 2563 and 2591. Plectin repeat units lie at residues 2615 to 2652 (RQYL…PGTA), 2653 to 2690 (LILL…PELH), 2691 to 2728 (HKLL…RDHA), 2729 to 2766 (IRLL…EEMS), and 2770 to 2804 (ADPG…PETG). Position 2675 is a phosphothreonine (T2675). Position 2822 is a phosphotyrosine (Y2822). N6-acetyllysine is present on residues K2842 and K2880. Plectin repeat units lie at residues 2905–2942 (ALVP…ADSV), 2943–2980 (RRAL…PDVA), 2981–3018 (VALL…PELH), 3019–3056 (EKLL…REQG), and 3057–3094 (LRLL…KETN). Y3151 is subject to Phosphotyrosine. N6-acetyllysine is present on K3209. Plectin repeat units follow at residues 3274-3311 (RTLL…PSTA), 3312-3349 (TLLL…PELH), 3350-3387 (EKLL…REHA), 3388-3425 (IRLL…EEMS), and 3429-3463 (ADPS…PETG). At T3574 the chain carries Phosphothreonine. Y3579 is subject to Phosphotyrosine. Plectin repeat units follow at residues 3609 to 3646 (WRYL…AEVA), 3647 to 3684 (RLLL…PELH), 3685 to 3722 (DRLL…AEEA), 3723 to 3760 (LRLL…KDTH), 3764 to 3797 (SEPS…DGSG), and 3800 to 3834 (LLPL…EATA). T3819 is modified (phosphothreonine). Residue S3843 is modified to Phosphoserine. Plectin repeat units lie at residues 3852–3889 (QKFL…PGTA), 3890–3927 (FELL…PEFK), 3928–3965 (DRLL…KDHG), 3966–4003 (IRLL…EEMN), 4007–4041 (TDPS…PQTG), and 4043–4094 (RLLP…HQTY). The tract at residues 4039 to 4089 (QTGLRLLPLKEKKRERKTSSKSSVRKRRVVIVDPETSKEMSVYEAYRKGLI) is binding to intermediate filaments. S4171, S4173, S4174, S4175, S4178, S4179, S4180, and S4181 each carry phosphoserine. Residue Y4182 is modified to Phosphotyrosine. S4185, S4189, and S4195 each carry phosphoserine. Plectin repeat units lie at residues 4197–4234 (SDPT…NITG), 4235–4272 (QRLL…KIMV), 4273–4310 (DRIN…YEAG), 4311–4348 (QRFL…ARTA), and 4349–4386 (QKLR…EGTG). T4200 is modified (phosphothreonine). T4328 is modified (phosphothreonine; by CDK1). 2 positions are modified to phosphoserine: S4396 and S4402. Positions 4400 to 4460 (YYSPYSVSGS…SGYGRRYASG (61 aa)) are enriched in low complexity. The segment at 4400-4473 (YYSPYSVSGS…SLGGPESAVA (74 aa)) is disordered. Position 4404 is a phosphotyrosine (Y4404). Residues S4405, S4407, and S4411 each carry the phosphoserine modification. The residue at position 4412 (T4412) is a Phosphothreonine. The segment at 4414–4429 (GSRTGSRTGSRAGSRR) is 4 X 4 AA tandem repeats of G-S-R-X. Position 4415 is a phosphoserine (S4415). Residues R4416 and R4429 each carry the omega-N-methylarginine modification. S4431 and S4464 each carry phosphoserine.

The protein belongs to the plakin or cytolinker family. Homodimer or homotetramer. Interacts (via actin-binding domain) with SYNE3. Interacts (via calponin-homology (CH) 1 domain) with VIM (via rod region). Interacts (via N-terminus) with DST isoform 2 (via N-terminus). Interacts with FER. Interacts with TOR1A. Interacts with ANK3. Identified in complexes that contain VIM, EZR, AHNAK, BFSP1, BFSP2, ANK2, PLEC, PRX and spectrin. Post-translationally, phosphorylated by CDK1; regulates dissociation from intermediate filaments during mitosis.

It is found in the cytoplasm. Its subcellular location is the cytoskeleton. The protein resides in the cell junction. The protein localises to the hemidesmosome. It localises to the cell projection. It is found in the podosome. Its function is as follows. Interlinks intermediate filaments with microtubules and microfilaments and anchors intermediate filaments to desmosomes or hemidesmosomes. May be involved not only in the cross-linking and stabilization of cytoskeletal intermediate filaments network, but also in the regulation of their dynamics. The polypeptide is Plectin (PLEC) (Cricetulus griseus (Chinese hamster)).